Reading from the N-terminus, the 388-residue chain is Staphopain A (388 aa).

An N-terminal signal peptide occupies residues 1–25; that stretch reads MKRNFPKLIALSLIFSLSITPIANA. Residues 26 to 214 constitute a propeptide that is removed on maturation; sequence ESNSNIKAKD…TSQFKSNNYT (189 aa). Residues cysteine 238, histidine 334, and asparagine 355 contribute to the active site.

The protein belongs to the peptidase C47 family. In terms of assembly, in the cytoplasm, prematurely activated/folded ScpA forms a stable non-covalent complex with ScpB. Post-translationally, cleavage leads to the activation of ScpA probably by an auto-catalytic manner.

It localises to the secreted. The catalysed reaction is Broad endopeptidase action on proteins including elastin, but rather limited hydrolysis of small-molecule substrates. Assays are conveniently made with hemoglobin, casein or Z-Phe-Arg-NHMec as substrate.. With respect to regulation, prematurely activated/folded staphopain A is inhibited by staphostatin A (ScpB), which is probably required to protect staphylococcal cytoplasmic proteins from degradation by ScpA. Its function is as follows. Cysteine protease that plays an important role in the inhibition of host innate immune response. Cleaves host elastins found in connective tissues, pulmonary surfactant protein A in the lungs, and the chemokine receptor CXCR2 on leukocytes. Proteolytic cleavage of surfactant protein A impairs bacterial phagocytosis by neutrophils while CXCR2 degradation blocks neutrophil activation and chemotaxis. Additionally, promotes vascular leakage by activating the plasma kallikerin/kinin system, resulting in hypotension. The polypeptide is Staphopain A (sspP) (Staphylococcus aureus (strain MRSA252)).